The chain runs to 435 residues: NAD-specific glutamate dehydrogenase A (435 aa).

The tract at residues 1–28 (MTMASKSDSTHDESGDEAADSTEPESAL) is disordered. Residues 14–23 (SGDEAADSTE) are compositionally biased toward acidic residues. K126 is an active-site residue.

It belongs to the Glu/Leu/Phe/Val dehydrogenases family. In terms of assembly, homohexamer. Post-translationally, the N-terminus is blocked.

It catalyses the reaction L-glutamate + NAD(+) + H2O = 2-oxoglutarate + NH4(+) + NADH + H(+). With respect to regulation, inhibited by ethanol, acetone, acetonitrile and 2-propanol (65 to 70% inhibition) and to a lesser extent by methanol and dimethyl formamide (26 and 49 % inhibition respectively). No effect of glycerol or DMSO. This Halobacterium salinarum (Halobacterium halobium) protein is NAD-specific glutamate dehydrogenase A (gdhX).